The sequence spans 332 residues: Phospholipase A2 inhibitor beta (332 aa).

The signal sequence occupies residues 1-23 (MKSSVPSLLFVSLVMSLNSYTQQ). The N-linked (GlcNAc...) asparagine glycan is linked to Asn35. LRR repeat units follow at residues 78 to 101 (LPNL…LFRN), 103 to 125 (PELH…IFTS), 127 to 149 (TSLT…WFET), 150 to 173 (LKEL…CFDK), 175 to 197 (EKLT…MFSG), 198 to 221 (LDNL…SFHG), 223 to 245 (PKLS…VFQP), and 247 to 269 (NHXV…VAIP). Asn232 carries an N-linked (GlcNAc...) asparagine glycan. Asn272 is a glycosylation site (N-linked (GlcNAc...) asparagine). The LRRCT domain maps to 280–331 (NPWACNCRMDNLLTWVKEHKIDLYSKQEIVCAFPKSFKGEEATSLHRSQICP).

It belongs to the beta-type phospholipase A2 inhibitor family. As to quaternary structure, homotrimer.

It is found in the secreted. Inhibits the enzymatic activity of the basic phospholipase A2 (PLA2). This chain is Phospholipase A2 inhibitor beta, found in Elaphe climacophora (Japanese rat snake).